A 1758-amino-acid polypeptide reads, in one-letter code: uncharacterized protein (1758 aa).

An N-terminal signal peptide occupies residues Met1–Ala12. Residues Glu1465–Phe1758 enclose the Autotransporter domain.

The protein resides in the cell outer membrane. This is an uncharacterized protein from Escherichia coli (strain K12).